The chain runs to 204 residues: Large ribosomal subunit protein uL4 (204 aa).

The segment at 49–76 (KTKGISDVSGTTAKPYGQKRTGRARQGS) is disordered.

It belongs to the universal ribosomal protein uL4 family. In terms of assembly, part of the 50S ribosomal subunit.

One of the primary rRNA binding proteins, this protein initially binds near the 5'-end of the 23S rRNA. It is important during the early stages of 50S assembly. It makes multiple contacts with different domains of the 23S rRNA in the assembled 50S subunit and ribosome. In terms of biological role, forms part of the polypeptide exit tunnel. This chain is Large ribosomal subunit protein uL4, found in Wolbachia sp. subsp. Drosophila simulans (strain wRi).